Here is a 159-residue protein sequence, read N- to C-terminus: Phosphopantetheine adenylyltransferase (159 aa).

Ser-9 serves as a coordination point for substrate. ATP-binding positions include 9 to 10 (SF) and His-17. Residues Lys-41, Ile-73, and Lys-87 each contribute to the substrate site. Residues 88–90 (GLR), Glu-98, and 122–128 (WGYVSSS) each bind ATP.

The protein belongs to the bacterial CoaD family. As to quaternary structure, homohexamer. It depends on Mg(2+) as a cofactor.

Its subcellular location is the cytoplasm. The enzyme catalyses (R)-4'-phosphopantetheine + ATP + H(+) = 3'-dephospho-CoA + diphosphate. The protein operates within cofactor biosynthesis; coenzyme A biosynthesis; CoA from (R)-pantothenate: step 4/5. In terms of biological role, reversibly transfers an adenylyl group from ATP to 4'-phosphopantetheine, yielding dephospho-CoA (dPCoA) and pyrophosphate. This chain is Phosphopantetheine adenylyltransferase, found in Nocardioides sp. (strain ATCC BAA-499 / JS614).